Reading from the N-terminus, the 207-residue chain is Ribosomal RNA small subunit methyltransferase G (207 aa).

Residues Gly-73, Leu-78, Val-124–Glu-125, and Arg-139 contribute to the S-adenosyl-L-methionine site.

It belongs to the methyltransferase superfamily. RNA methyltransferase RsmG family.

It is found in the cytoplasm. It carries out the reaction guanosine(527) in 16S rRNA + S-adenosyl-L-methionine = N(7)-methylguanosine(527) in 16S rRNA + S-adenosyl-L-homocysteine. In terms of biological role, specifically methylates the N7 position of guanine in position 527 of 16S rRNA. The sequence is that of Ribosomal RNA small subunit methyltransferase G from Salmonella agona (strain SL483).